The following is a 76-amino-acid chain: Attractin (76 aa).

Residues 1–18 (MKVAIIILSLALVAAVFA) form the signal peptide. 3 cysteine pairs are disulfide-bonded: Cys-22/Cys-59, Cys-31/Cys-51, and Cys-38/Cys-44. N-linked (GlcNAc...) asparagine glycosylation occurs at Asn-26.

In terms of assembly, binds to temptin and enticin. In terms of tissue distribution, produced by the albumen gland of the egg cordons.

The protein localises to the secreted. Its function is as follows. Water-borne pheromone that attract the marine mollusk Aplysia into breeding aggregations and coordinate male and female reproductive behavior within the aggregation. This Aplysia californica (California sea hare) protein is Attractin (ATT).